The chain runs to 542 residues: uncharacterized protein (542 aa).

The span at 125–138 (ANSNSSSTGRDSTP) shows a compositional bias: low complexity. Disordered regions lie at residues 125 to 182 (ANSN…NHHN), 194 to 333 (LPPT…CSSS), 390 to 428 (SSST…YSSI), and 459 to 487 (SSSS…PSCN). The span at 202 to 213 (QKPSFLSNSNQI) shows a compositional bias: polar residues. 4 stretches are compositionally biased toward low complexity: residues 228–306 (SYTS…NSNN), 314–333 (NKLS…CSSS), 390–423 (SSST…TSTN), and 459–479 (SSSS…GGNS).

This is an uncharacterized protein from Dictyostelium discoideum (Social amoeba).